A 1134-amino-acid chain; its full sequence is Ovochymase-1 (1134 aa).

Positions 1 to 22 are cleaved as a signal peptide; it reads MGLLASAGLLLLLVIGHPRSLG. A propeptide spans 23 to 46 (activation peptide); the sequence is LKCGIRMVNMKSKEPAVGSRFFSR. The Peptidase S1 1 domain maps to 38–296; sequence AVGSRFFSRI…LMDFITQNLF (259 aa). N-linked (GlcNAc...) asparagine glycosylation is present at asparagine 52. Residues cysteine 72 and cysteine 88 are joined by a disulfide bond. Histidine 87 (charge relay system) is an active-site residue. Asparagine 99 is a glycosylation site (N-linked (GlcNAc...) asparagine). Residue glutamate 116 participates in Ca(2+) binding. The Charge relay system role is filled by aspartate 139. 3 cysteine pairs are disulfide-bonded: cysteine 173–cysteine 243, cysteine 204–cysteine 222, and cysteine 233–cysteine 262. The Charge relay system role is filled by serine 237. CUB domains are found at residues 284-410 and 419-531; these read VSEL…VTAV and CGSL…FTIL. A glycan (N-linked (GlcNAc...) asparagine) is linked at asparagine 324. 3 disulfides stabilise this stretch: cysteine 341/cysteine 373, cysteine 419/cysteine 446, and cysteine 473/cysteine 494. Asparagine 431 carries N-linked (GlcNAc...) asparagine glycosylation. A glycan (N-linked (GlcNAc...) asparagine) is linked at asparagine 507. The 238-residue stretch at 575–812 folds into the Peptidase S1 2 domain; the sequence is IAGGEEACPH…FLDWIQSKIN (238 aa). Cysteine 600 and cysteine 616 are disulfide-bonded. Catalysis depends on charge relay system residues histidine 615 and aspartate 664. Disulfide bonds link cysteine 698–cysteine 769, cysteine 729–cysteine 747, cysteine 759–cysteine 788, and cysteine 846–cysteine 873. Residue serine 763 is the Charge relay system of the active site. A CUB 3 domain is found at 846 to 957; the sequence is CSEAELEKPR…GAFGISYIVL (112 aa). A glycan (N-linked (GlcNAc...) asparagine) is linked at asparagine 1106.

The protein belongs to the peptidase S1 family.

Its subcellular location is the secreted. The sequence is that of Ovochymase-1 (OVCH1) from Homo sapiens (Human).